A 646-amino-acid polypeptide reads, in one-letter code: MSSQKKKISLFAFFLLTVITITLKTYFSYYVDFSLGVKGLVQNLILLMNPYSLVALVLSVFLFFKGKKAFWFMFIGGFLLTFLLYANVVYFRFFSDFLTFSTLNQVGNVESMGGAVSASFKWYDFVYFIDTLVYLFILIFKTKWLDTKAFSKKFVPVVMAASVALFFLNLAFAETDRPELLTRTFDHKYLVKYLGPYNFTVYDGVKTIENNQQKALASEDDLTKVLNYTKQRQTEPNPEYYGVAKKKNIIKIHLESFQTFLINKKVNGKEVTPFLNKLSSGKQQFTYFPNFFHQTGQGKTSDSEFTMDNSLYGLPQGSAFSLKGDNTYQSLPAILDQKQGYKSDVMHGDYKTFWNRDQVYKHFGIDKFYDATYYDMSDKNVVNLGLKDKIFFKDSANYQAKMKSPFYSHLITLTNHYPFTLDEKDATIEKSNTGDATVDGYIQTARYLDEALEEYINDLKKKGLYDNSVIMIYGDHYGISENHNNAMEKLLGEKITPAKFTDLNRTGFWIKIPGKSGGINNEYAGQVDVMPTILHLAGIDTKNYLMFGTDLFSKGHNQVVPFRNGDFITKDYKYVNGKIYSNKNNELITTQPADFEKNKKQVEKDLEMSDNVLNGDLFRFYKNPDFKKVNPSKYKYETGPKANSKK.

The Cytoplasmic segment spans residues 1 to 7 (MSSQKKK). A helical transmembrane segment spans residues 8–28 (ISLFAFFLLTVITITLKTYFS). At 29 to 43 (YYVDFSLGVKGLVQN) the chain is on the extracellular side. The helical transmembrane segment at 44–64 (LILLMNPYSLVALVLSVFLFF) threads the bilayer. Over 65-68 (KGKK) the chain is Cytoplasmic. Residues 69–89 (AFWFMFIGGFLLTFLLYANVV) traverse the membrane as a helical segment. The Extracellular portion of the chain corresponds to 90–119 (YFRFFSDFLTFSTLNQVGNVESMGGAVSAS). A helical membrane pass occupies residues 120 to 140 (FKWYDFVYFIDTLVYLFILIF). Residues 141-153 (KTKWLDTKAFSKK) are Cytoplasmic-facing. A helical membrane pass occupies residues 154–174 (FVPVVMAASVALFFLNLAFAE). Topologically, residues 175 to 646 (TDRPELLTRT…ETGPKANSKK (472 aa)) are extracellular. The Mn(2+) site is built by E255 and T300. T300 is a catalytic residue. H416 lines the substrate pocket. The Mn(2+) site is built by D475 and H476. Positions 623–638 (NPDFKKVNPSKYKYET) are enriched in basic and acidic residues. A disordered region spans residues 623 to 646 (NPDFKKVNPSKYKYETGPKANSKK).

The protein belongs to the LTA synthase family. Proteolytically cleaved.

Its subcellular location is the cell membrane. It localises to the secreted. It participates in cell wall biogenesis; lipoteichoic acid biosynthesis. Functionally, catalyzes the polymerization of lipoteichoic acid (LTA) polyglycerol phosphate, a reaction that presumably uses phosphatidylglycerol (PG) as substrate. Is required for staphylococcal growth and cell division process. The protein is Lipoteichoic acid synthase (ltaS) of Staphylococcus aureus (strain bovine RF122 / ET3-1).